The following is a 140-amino-acid chain: Large ribosomal subunit protein uL11 (140 aa).

It belongs to the universal ribosomal protein uL11 family. Part of the ribosomal stalk of the 50S ribosomal subunit. Interacts with L10 and the large rRNA to form the base of the stalk. L10 forms an elongated spine to which L12 dimers bind in a sequential fashion forming a multimeric L10(L12)X complex. One or more lysine residues are methylated.

Forms part of the ribosomal stalk which helps the ribosome interact with GTP-bound translation factors. In Brachyspira hyodysenteriae (strain ATCC 49526 / WA1), this protein is Large ribosomal subunit protein uL11.